The sequence spans 629 residues: MNLATNRALLKPFTQAEFPTLEAAAHPHVPAHLMPEYWQAANRHLVKKILCEFTHEKIISPQIYRQAAGINHYELRLKDCTYYFSARHYQLDHLEIEAGSIRVSSAGQDKPLDAMSLIIKLKDALGMSETLLPTYLEEITSTLYSKAYKLAHQAIPATTLAKADYQTIEAGMTEGHPVFIANNGRIGFDMQDYDQFAPESASALQLVWIAVRKDKTTFSSLEGLDHDSLLKQELGEQFTKFQQHLSALGQAADSFYFMPVHPWQWREKIARTFAGEIARGDIIYLGESQDCYQVQQSIRTFFNLSAPQKCYVKTALSILNMGFMRGLSPLYMSCTPQINAWVADLIESDSYFAEQGFVILKEIAAIGYHHRYYEEALTQDSAYKKMLSALWRESPLPHIEPQQTLMTMAALLHVDHQEQALLAALIKHSGLSAKEWVKRYLNLYLSPLLHAFFAYDLVFMPHGENLILVLDAGIPVKILMKDIGEEVAVLNGSEPLPQEVQRLAVELEEEMKLNYILLDIFDCIFRYLAPILDKQTEVSEAQFWELVADNVRDYQAQHPQLADKFAQYDLFKDSFVRTCLNRIQLNNNQQMIDLADREKNLRFAGGIDNPLAAFRQSHAFGNQKLKPKS.

The protein belongs to the IucA/IucC family. In terms of assembly, homodimer.

The enzyme catalyses 2 N-(3-carboxypropanoyl)-N-hydroxyputrescine + 2 ATP = putrebactin + 2 AMP + 2 diphosphate + 2 H(+). The catalysed reaction is 2 N-(3-carboxypropanoyl)-N-hydroxyputrescine + ATP = pre-putrebactin + AMP + diphosphate + H(+). It carries out the reaction pre-putrebactin + ATP = putrebactin + AMP + diphosphate + H(+). The protein operates within siderophore biosynthesis. Requires Mg(2+) for activity. In terms of biological role, ligase involved in the biosynthesis of the siderophore putrebactin. Catalyzes the ATP-dependent head-to-tail dimerization of N-hydroxy-N-succinyl-putrescine (HSP) to give pre-putrebactin and subsequent macrocyclization of pre-putrebactin to give putrebactin. This Shewanella sp. (strain MR-4) protein is Putrebactin synthase.